The sequence spans 1245 residues: Probable tail spike protein (1245 aa).

In terms of domain architecture, Peptidase S74 spans 1105–1245 (SDVHYKMDIV…EARLQALEEK (141 aa)).

In terms of processing, proteolytic cleavage and release of the chaperone in the host cytosol stabilizes the folded protein. The cleavage gives rise to the mature tail spike protein but is not essential for catalytic activity.

The protein resides in the virion. Functionally, functions as a receptor binding protein (RBP) and probably mediates the attachment to the host capsular exopolysaccharides. Displays a depolymerase activity that specifically degrades the KN2-type polysaccharides of Klebsiella pneumoniae capsule. In terms of biological role, the C-terminal chaperone protein mediates homotrimerization and proper folding of the catalytic trimer. This chain is Probable tail spike protein, found in Klebsiella (Taipeivirus 0507KN21).